A 417-amino-acid polypeptide reads, in one-letter code: Neuropeptide FF receptor 2 (417 aa).

Residues 1–45 are Extracellular-facing; sequence MGKRWDSNSSGSWDHIWSGNDTQHPWYSDINITYMNYYLHQPHVT. 3 N-linked (GlcNAc...) asparagine glycosylation sites follow: N8, N20, and N31. Residues 46–66 form a helical membrane-spanning segment; it reads AVFISSYFLIFFLCMVGNTVV. The Cytoplasmic portion of the chain corresponds to 67-82; sequence CFVVIRNRYMHTVTNF. The helical transmembrane segment at 83 to 103 threads the bilayer; the sequence is FIFNLAISDLLVGIFCMPITL. Residues 104-119 are Extracellular-facing; it reads LDNIIAGWPFGSSMCK. C118 and C206 are oxidised to a cystine. Residues 120 to 140 form a helical membrane-spanning segment; the sequence is ISGLVQGISVAASVFTLVAIA. At 141–160 the chain is on the cytoplasmic side; the sequence is VDRFRCVVYPFKPKLTVKTA. A helical membrane pass occupies residues 161–181; that stretch reads FVMIVIIWGLAITIMTPSAIM. Residues 182-217 are Extracellular-facing; it reads LHVQEEKYYRVRLSSHNKTSTVYWCREDWPNQEMRR. N-linked (GlcNAc...) asparagine glycosylation is present at N198. A helical membrane pass occupies residues 218–238; sequence IYTTVLFATIYLAPLSLIVIM. Residues 239 to 274 lie on the Cytoplasmic side of the membrane; that stretch reads YARIGASLFKTSAHSTGKQRLEQWHVSKKKQKVIKM. A helical membrane pass occupies residues 275-295; that stretch reads LLTVALLFILSWLPLWTLMML. The Extracellular segment spans residues 296 to 310; sequence SDYADLSPNKLRVIN. The helical transmembrane segment at 311-331 threads the bilayer; sequence IYVYPFAHWLAFCNSSVNPII. Residues 332–417 are Cytoplasmic-facing; sequence YGFFNENFRS…TGEATNSTET (86 aa). Residues 378–417 form a disordered region; the sequence is HEPASQNPSGENLGCRKSADNPTQESLMEETGEATNSTET.

It belongs to the G-protein coupled receptor 1 family.

Its subcellular location is the cell membrane. Receptor for NPAF (A-18-F-amide) and NPFF (F-8-F-amide) neuropeptides, also known as morphine-modulating peptides. Can also be activated by a variety of naturally occurring or synthetic FMRF-amide like ligands. This receptor mediates its action by association with G proteins that activate a phosphatidylinositol-calcium second messenger system. This is Neuropeptide FF receptor 2 (Npffr2) from Rattus norvegicus (Rat).